Reading from the N-terminus, the 112-residue chain is Putative pterin-4-alpha-carbinolamine dehydratase (112 aa).

Belongs to the pterin-4-alpha-carbinolamine dehydratase family.

The catalysed reaction is (4aS,6R)-4a-hydroxy-L-erythro-5,6,7,8-tetrahydrobiopterin = (6R)-L-erythro-6,7-dihydrobiopterin + H2O. The polypeptide is Putative pterin-4-alpha-carbinolamine dehydratase (Vibrio parahaemolyticus serotype O3:K6 (strain RIMD 2210633)).